Here is a 643-residue protein sequence, read N- to C-terminus: E3 ubiquitin-protein ligase AMFR (643 aa).

The next 6 membrane-spanning stretches (helical) occupy residues 82–102 (LFVW…AKLI), 122–142 (FWNF…VQTV), 186–206 (VLSL…VCCV), 215–235 (TLAF…HVIL), 254–274 (GTYV…LDLM), and 276–296 (HIHM…VIFM). The RING-type zinc-finger motif lies at 341–379 (CAICWDSMQAARKLPCGHLFHNSCLRSWLEQDTSCPTCR). The chain crosses the membrane as a helical span at residues 429-449 (IASWLPSFSVEVMHTTNILGI). The CUE domain maps to 456 to 498 (QLNAMAHQIQEMFPQVPYHLVLQDLQMTRSVEITTDNILEGRI). Residues 504–535 (TQRSDSLRPALNSPVERPSPDLEEGEASVQTE) are disordered. Phosphoserine occurs at positions 516 and 542. A disordered region spans residues 598–624 (LNKSSEDDGASERLLPSEGTSSDPVTL). Positions 622–640 (VTLRRRMLAAAAERRLQRQ) are VCP/p97-interacting motif (VIM).

Interacts with RNF5. Also forms an ERAD complex containing VCP/p97, NGLY1; PSMC1; SAKS1 and RAD23B required for coupling retrotranslocation, ubiquitination and deglycosylation. Interacts with DERL1. Interacts (through a region distinct from the RING finger) with UBE2G2/UBC7. Component of the VCP/p97-AMFR/gp78 complex that enhances VCP/p97 binding to polyubiquitinated proteins for their degradation by the endoplasmic reticulum-associated degradation (ERAD) pathway. Interacts (via the VIM) with VCP/p97. Interacts (via its membrane domain) with INSIG1; the interaction initiates the sterol-mediated ubiquitination and degradation of HMGCR by the ERAD pathway. Interacts with AUP1, UBE2G2 and RNF139/TRC8; interaction with AUP1 facilitates interaction of AMFR with ubiquitin-conjugating enzyme UBE2G2 and ubiquitin ligase RNF139, leading to sterol-induced ubiquitination of HNGCR and its subsequent proteasomal degradation. Interacts with BAG6. Interacts with USP13 (via UBA 2 domain); the interaction is direct. Interacts with LMBR1L, UBAC2 and CTNNB1. Interacts with C18orf32. In terms of processing, palmitoylation of the RING-type zing finger by ZDHHC6 promotes localization to the peripheral endoplasmic reticulum. Expressed in heart, brain, liver, lung, skeletal muscle, kidney and testis. Not detected in spleen.

The protein localises to the endoplasmic reticulum membrane. The catalysed reaction is [E2 ubiquitin-conjugating enzyme]-S-ubiquitinyl-L-cysteine + [acceptor protein]-L-cysteine = [E2 ubiquitin-conjugating enzyme]-L-cysteine + [acceptor protein]-S-ubiquitinyl-L-cysteine.. It participates in protein modification; protein ubiquitination. Its function is as follows. E3 ubiquitin-protein ligase that mediates the polyubiquitination of lysine and cysteine residues on target proteins, such as CD3D, CYP3A4, CFTR, INSIG1, SOAT2/ACAT2 and APOB for proteasomal degradation. Component of a VCP/p97-AMFR/gp78 complex that participates in the final step of endoplasmic reticulum-associated degradation (ERAD). The VCP/p97-AMFR/gp78 complex is involved in the sterol-accelerated ERAD degradation of HMGCR through binding to the HMGCR-INSIG1 complex at the ER membrane. In addition, interaction of AMFR with AUP1 facilitates interaction of AMFR with ubiquitin-conjugating enzyme UBE2G2 and ubiquitin ligase RNF139, leading to sterol-induced HMGCR ubiquitination. The ubiquitinated HMGCR is then released from the ER by the complex into the cytosol for subsequent destruction. In addition to ubiquitination on lysine residues, catalyzes ubiquitination on cysteine residues: together with INSIG1, mediates polyubiquitination of SOAT2/ACAT2 at 'Cys-277', leading to its degradation when the lipid levels are low. Catalyzes ubiquitination and subsequent degradation of INSIG1 when cells are depleted of sterols. Mediates polyubiquitination of INSIG2 at 'Cys-215' in some tissues, leading to its degradation. Also regulates ERAD through the ubiquitination of UBL4A a component of the BAG6/BAT3 complex. Also acts as a scaffold protein to assemble a complex that couples ubiquitination, retranslocation and deglycosylation. Mediates tumor invasion and metastasis as a receptor for the GPI/autocrine motility factor. In association with LMBR1L and UBAC2, negatively regulates the canonical Wnt signaling pathway in the lymphocytes by promoting the ubiquitin-mediated degradation of CTNNB1 and Wnt receptors FZD6 and LRP6. Regulates NF-kappa-B and MAPK signaling pathways by mediating 'Lys-27'-linked polyubiquitination of TAB3 and promoting subsequent TAK1/MAP3K7 activation. The protein is E3 ubiquitin-protein ligase AMFR (Amfr) of Mus musculus (Mouse).